The chain runs to 497 residues: Guanosine-5'-triphosphate,3'-diphosphate pyrophosphatase (497 aa).

The protein belongs to the GppA/Ppx family. GppA subfamily.

The catalysed reaction is guanosine 3'-diphosphate 5'-triphosphate + H2O = guanosine 3',5'-bis(diphosphate) + phosphate + H(+). The protein operates within purine metabolism; ppGpp biosynthesis; ppGpp from GTP: step 2/2. Its function is as follows. Catalyzes the conversion of pppGpp to ppGpp. Guanosine pentaphosphate (pppGpp) is a cytoplasmic signaling molecule which together with ppGpp controls the 'stringent response', an adaptive process that allows bacteria to respond to amino acid starvation, resulting in the coordinated regulation of numerous cellular activities. The polypeptide is Guanosine-5'-triphosphate,3'-diphosphate pyrophosphatase (Pseudoalteromonas translucida (strain TAC 125)).